Reading from the N-terminus, the 675-residue chain is Potassium-transporting ATPase ATP-binding subunit (675 aa).

Helical transmembrane passes span 34–54 (IMFVVEVGMILTLILICFPDI), 65–85 (LITIFIILLITILFANFSEAF), 216–236 (IALFTLLTTLTIIFLVVIVTL), and 245–265 (LILPIAMLIALTVCLIPTTIG). Asp304 acts as the 4-aspartylphosphate intermediate in catalysis. ATP contacts are provided by residues Asp341, Glu345, 372–379 (FTAETRMS), and Lys390. Mg(2+) is bound by residues Asp513 and Asp517. The next 3 membrane-spanning stretches (helical) occupy residues 569-591 (ALTTFSLANDVAKYFAILPALMM), 611-631 (AIISALIFNALIIVALIPIAM), and 644-664 (IFINNMLIYGLGGLIVPFLGI).

The protein belongs to the cation transport ATPase (P-type) (TC 3.A.3) family. Type IA subfamily. As to quaternary structure, the system is composed of three essential subunits: KdpA, KdpB and KdpC.

The protein localises to the cell membrane. It carries out the reaction K(+)(out) + ATP + H2O = K(+)(in) + ADP + phosphate + H(+). Functionally, part of the high-affinity ATP-driven potassium transport (or Kdp) system, which catalyzes the hydrolysis of ATP coupled with the electrogenic transport of potassium into the cytoplasm. This subunit is responsible for energy coupling to the transport system and for the release of the potassium ions to the cytoplasm. In Staphylococcus aureus (strain MSSA476), this protein is Potassium-transporting ATPase ATP-binding subunit.